The primary structure comprises 92 residues: Small integral membrane protein 12 (92 aa).

Residues Tyr15–Phe34 traverse the membrane as a helical segment.

Belongs to the SMIM12 family.

Its subcellular location is the membrane. The chain is Small integral membrane protein 12 (Smim12) from Mus musculus (Mouse).